We begin with the raw amino-acid sequence, 163 residues long: tRNA-acetylating toxin 2 (163 aa).

Residue Tyr137 is part of the active site.

Belongs to the acetyltransferase family. GNAT subfamily. As to quaternary structure, homodimer. Forms a complex with cognate antitoxin TacA2.

The catalysed reaction is glycyl-tRNA(Gly) + acetyl-CoA = N-acetylglycyl-tRNA(Gly) + CoA + H(+). The enzyme catalyses L-isoleucyl-tRNA(Ile) + acetyl-CoA = N-acetyl-L-isoleucyl-tRNA(Ile) + CoA + H(+). It carries out the reaction L-leucyl-tRNA(Leu) + acetyl-CoA = N-acetyl-L-leucyl-tRNA(Leu) + CoA + H(+). Toxic component of a type II toxin-antitoxin (TA) system. Acetylates tRNA and inhibits translation. Acetylates mainly Gly and Ile/Leu in vitro. Overexpression during the lag phase of a tacA2-tacT2 deletion strain leads to a 100-fold increase in persister cells in the presence of cefotaxime and a non-growth state in the absence of antibiotic. This protein, which has a single amino acid compared to S.typhimurium strain 14028s (Lys-29 is Glu in 14028s), produces 100-fold more persister cells, has much higher acetylation activity and binds tRNA much better. Persister cell formation and the growth defect are neutralized by cognate antitoxin TacA2. In terms of biological role, the TacA2-TacT2 complex both represses and derepresses expression of its own operon. In Salmonella enteritidis, this protein is tRNA-acetylating toxin 2.